The primary structure comprises 191 residues: Inosine triphosphate pyrophosphatase (191 aa).

15-20 (TGNTNK) is a binding site for ITP. Glu43 contributes to the Mg(2+) binding site. ITP contacts are provided by residues Lys55, 71 to 72 (DT), Lys88, 147 to 150 (FGWD), Lys168, and 173 to 174 (HR).

Belongs to the HAM1 NTPase family. In terms of assembly, homodimer. It depends on Mg(2+) as a cofactor. Mn(2+) is required as a cofactor.

It localises to the cytoplasm. The protein localises to the nucleus. The catalysed reaction is ITP + H2O = IMP + diphosphate + H(+). It carries out the reaction dITP + H2O = dIMP + diphosphate + H(+). It catalyses the reaction XTP + H2O = XMP + diphosphate + H(+). Its function is as follows. Pyrophosphatase that hydrolyzes non-canonical purine nucleotides such as inosine triphosphate (ITP), deoxyinosine triphosphate (dITP) or xanthosine 5'-triphosphate (XTP) to their respective monophosphate derivatives. The enzyme does not distinguish between the deoxy- and ribose forms. Probably excludes non-canonical purines from RNA and DNA precursor pools, thus preventing their incorporation into RNA and DNA and avoiding chromosomal lesions. The chain is Inosine triphosphate pyrophosphatase from Chaetomium globosum (strain ATCC 6205 / CBS 148.51 / DSM 1962 / NBRC 6347 / NRRL 1970) (Soil fungus).